The sequence spans 170 residues: Arginine repressor (170 aa).

It belongs to the ArgR family.

Its subcellular location is the cytoplasm. It functions in the pathway amino-acid biosynthesis; L-arginine biosynthesis [regulation]. Regulates arginine biosynthesis genes. This is Arginine repressor from Mycobacterium tuberculosis (strain ATCC 25177 / H37Ra).